Here is a 597-residue protein sequence, read N- to C-terminus: Arginine--tRNA ligase (597 aa).

Positions 124-134 (PNVAKPLHVGH) match the 'HIGH' region motif.

The protein belongs to the class-I aminoacyl-tRNA synthetase family. As to quaternary structure, monomer.

Its subcellular location is the cytoplasm. It catalyses the reaction tRNA(Arg) + L-arginine + ATP = L-arginyl-tRNA(Arg) + AMP + diphosphate. The sequence is that of Arginine--tRNA ligase from Agathobacter rectalis (strain ATCC 33656 / DSM 3377 / JCM 17463 / KCTC 5835 / VPI 0990) (Eubacterium rectale).